The primary structure comprises 269 residues: UPF0761 membrane protein HI_0276 (269 aa).

6 helical membrane passes run 32–52 (MLAM…FPVF), 89–109 (MSAV…NNID), 128–148 (FAIY…SIGI), 168–188 (LLSF…YTVV), 203–223 (FLAA…IVTF), and 232–252 (AMAT…VVLV).

The protein belongs to the UPF0761 family.

The protein localises to the cell inner membrane. The protein is UPF0761 membrane protein HI_0276 of Haemophilus influenzae (strain ATCC 51907 / DSM 11121 / KW20 / Rd).